Consider the following 212-residue polypeptide: Thymidylate kinase (212 aa).

ATP is bound at residue 10–17; sequence GPEGAGKT.

This sequence belongs to the thymidylate kinase family.

It carries out the reaction dTMP + ATP = dTDP + ADP. In terms of biological role, phosphorylation of dTMP to form dTDP in both de novo and salvage pathways of dTTP synthesis. The chain is Thymidylate kinase from Bacillus velezensis (strain DSM 23117 / BGSC 10A6 / LMG 26770 / FZB42) (Bacillus amyloliquefaciens subsp. plantarum).